The following is a 446-amino-acid chain: Tektin-4 (446 aa).

3 coiled-coil regions span residues 182 to 215, 297 to 346, and 378 to 422; these read IRNV…MDYS, DAIA…NDKS, and SEVG…ANSI.

The protein belongs to the tektin family.

The protein resides in the cytoplasm. Its subcellular location is the cytoskeleton. It localises to the cilium axoneme. It is found in the cell projection. The protein localises to the cilium. The protein resides in the flagellum. Functionally, microtubule inner protein (MIP) part of the dynein-decorated doublet microtubules (DMTs) in cilia and flagellar axoneme. Forms filamentous polymers in the walls of ciliary and flagellar microtubules. Contributes to normal sperm motility. This Xenopus laevis (African clawed frog) protein is Tektin-4 (tekt4).